The primary structure comprises 43 residues: Kappa-actitoxin-Avd4p (43 aa).

Disulfide bonds link cysteine 4/cysteine 39, cysteine 6/cysteine 32, and cysteine 22/cysteine 40.

The protein localises to the secreted. It localises to the nematocyst. In terms of biological role, blocks Kv3 voltage-gated potassium channels. Reduces blood pressure. The sequence is that of Kappa-actitoxin-Avd4p from Anemonia viridis (Snakelocks anemone).